Consider the following 339-residue polypeptide: D-erythrose-4-phosphate dehydrogenase (339 aa).

Residue 11–12 participates in NAD(+) binding; the sequence is RI. Substrate-binding positions include 158 to 160, arginine 204, 217 to 218, and arginine 240; these read SCT and TK. Catalysis depends on cysteine 159, which acts as the Nucleophile. NAD(+) is bound at residue asparagine 322.

Belongs to the glyceraldehyde-3-phosphate dehydrogenase family. Epd subfamily. As to quaternary structure, homotetramer.

Its subcellular location is the cytoplasm. The catalysed reaction is D-erythrose 4-phosphate + NAD(+) + H2O = 4-phospho-D-erythronate + NADH + 2 H(+). Its pathway is cofactor biosynthesis; pyridoxine 5'-phosphate biosynthesis; pyridoxine 5'-phosphate from D-erythrose 4-phosphate: step 1/5. Its function is as follows. Catalyzes the NAD-dependent conversion of D-erythrose 4-phosphate to 4-phosphoerythronate. The protein is D-erythrose-4-phosphate dehydrogenase of Aliivibrio salmonicida (strain LFI1238) (Vibrio salmonicida (strain LFI1238)).